The sequence spans 1714 residues: uncharacterized protein (1714 aa).

Disordered stretches follow at residues 47-70 (SVAGSEKNASDDDSDASSVMSDDL) and 584-616 (KKTGKGGWSGQKQQKPGAGGKKGATKESGKSKK). ATP-binding positions include 607–614 (ATKESGKS) and 806–813 (APTSAGKT). A compositionally biased stretch (basic and acidic residues) spans 607-616 (ATKESGKSKK). In terms of domain architecture, Helicase ATP-binding spans 793 to 963 (LDSVDRGNSA…WLNSSEQAKS (171 aa)). A DEVH box motif is present at residues 913–916 (DEVH). The tract at residues 1197-1223 (KRKRDDAEKKKKGDKDEDAGPEKDDDE) is disordered. Basic and acidic residues predominate over residues 1199-1218 (KRDDAEKKKKGDKDEDAGPE). Positions 1237-1391 (ALERFKLRGR…NPPFTVLFLL (155 aa)) constitute a Helicase C-terminal domain.

Belongs to the helicase family. SKI2 subfamily.

The protein resides in the nucleus. This is an uncharacterized protein from Caenorhabditis elegans.